Here is a 475-residue protein sequence, read N- to C-terminus: Deoxyguanosinetriphosphate triphosphohydrolase-like protein (475 aa).

Residues 118-272 (RLTHTLEVAQ…MDLSDDIAYS (155 aa)) form the HD domain.

It belongs to the dGTPase family. Type 2 subfamily.

The protein is Deoxyguanosinetriphosphate triphosphohydrolase-like protein (dgt) of Bifidobacterium longum (strain NCC 2705).